Here is a 305-residue protein sequence, read N- to C-terminus: tRNA pseudouridine synthase B (305 aa).

Asp-39 serves as the catalytic Nucleophile.

It belongs to the pseudouridine synthase TruB family. Type 1 subfamily.

The enzyme catalyses uridine(55) in tRNA = pseudouridine(55) in tRNA. Responsible for synthesis of pseudouridine from uracil-55 in the psi GC loop of transfer RNAs. This is tRNA pseudouridine synthase B from Staphylococcus haemolyticus (strain JCSC1435).